The following is a 505-amino-acid chain: ATP synthase subunit alpha (505 aa).

169–176 is an ATP binding site; the sequence is GDRKTGKT.

It belongs to the ATPase alpha/beta chains family. In terms of assembly, F-type ATPases have 2 components, CF(1) - the catalytic core - and CF(0) - the membrane proton channel. CF(1) has five subunits: alpha(3), beta(3), gamma(1), delta(1), epsilon(1). CF(0) has three main subunits: a(1), b(2) and c(9-12). The alpha and beta chains form an alternating ring which encloses part of the gamma chain. CF(1) is attached to CF(0) by a central stalk formed by the gamma and epsilon chains, while a peripheral stalk is formed by the delta and b chains.

Its subcellular location is the cell membrane. The enzyme catalyses ATP + H2O + 4 H(+)(in) = ADP + phosphate + 5 H(+)(out). Produces ATP from ADP in the presence of a proton gradient across the membrane. The alpha chain is a regulatory subunit. The chain is ATP synthase subunit alpha from Leuconostoc mesenteroides subsp. mesenteroides (strain ATCC 8293 / DSM 20343 / BCRC 11652 / CCM 1803 / JCM 6124 / NCDO 523 / NBRC 100496 / NCIMB 8023 / NCTC 12954 / NRRL B-1118 / 37Y).